A 401-amino-acid chain; its full sequence is 8-amino-7-oxononanoate synthase (401 aa).

Arginine 19 serves as a coordination point for substrate. Pyridoxal 5'-phosphate is bound at residue 106–107 (GY). Histidine 131 provides a ligand contact to substrate. Positions 176, 204, and 233 each coordinate pyridoxal 5'-phosphate. Lysine 236 is subject to N6-(pyridoxal phosphate)lysine. Threonine 350 is a substrate binding site.

This sequence belongs to the class-II pyridoxal-phosphate-dependent aminotransferase family. BioF subfamily. In terms of assembly, homodimer. Requires pyridoxal 5'-phosphate as cofactor.

It carries out the reaction 6-carboxyhexanoyl-[ACP] + L-alanine + H(+) = (8S)-8-amino-7-oxononanoate + holo-[ACP] + CO2. The protein operates within cofactor biosynthesis; biotin biosynthesis. Functionally, catalyzes the decarboxylative condensation of pimeloyl-[acyl-carrier protein] and L-alanine to produce 8-amino-7-oxononanoate (AON), [acyl-carrier protein], and carbon dioxide. The chain is 8-amino-7-oxononanoate synthase from Pseudomonas aeruginosa (strain LESB58).